Here is a 407-residue protein sequence, read N- to C-terminus: Probable beta-1,3-galactosyltransferase 4 (407 aa).

The chain crosses the membrane as a helical; Signal-anchor for type II membrane protein span at residues 23–39 (WTLFLCIGFFCAGILFS).

The protein belongs to the glycosyltransferase 31 family. It depends on Mn(2+) as a cofactor.

The protein resides in the golgi apparatus membrane. The protein operates within protein modification; protein glycosylation. Functionally, beta-1,3-galactosyltransferase that transfers galactose from UDP-galactose to substrates with a terminal glycosyl residue. This Arabidopsis thaliana (Mouse-ear cress) protein is Probable beta-1,3-galactosyltransferase 4 (B3GALT4).